Reading from the N-terminus, the 220-residue chain is Orotate phosphoribosyltransferase (220 aa).

Residue Lys-26 coordinates 5-phospho-alpha-D-ribose 1-diphosphate. Residue Phe-34 to Phe-35 participates in orotate binding. Residues Tyr-72–Lys-73, Arg-101, Lys-102, Lys-105, His-107, and Asp-126–Ser-134 contribute to the 5-phospho-alpha-D-ribose 1-diphosphate site. Orotate-binding residues include Thr-130 and Arg-158.

The protein belongs to the purine/pyrimidine phosphoribosyltransferase family. PyrE subfamily. Homodimer. The cofactor is Mg(2+).

It catalyses the reaction orotidine 5'-phosphate + diphosphate = orotate + 5-phospho-alpha-D-ribose 1-diphosphate. It participates in pyrimidine metabolism; UMP biosynthesis via de novo pathway; UMP from orotate: step 1/2. Its function is as follows. Catalyzes the transfer of a ribosyl phosphate group from 5-phosphoribose 1-diphosphate to orotate, leading to the formation of orotidine monophosphate (OMP). The sequence is that of Orotate phosphoribosyltransferase from Bordetella avium (strain 197N).